Reading from the N-terminus, the 125-residue chain is Small ribosomal subunit protein uS13 (125 aa).

The disordered stretch occupies residues 94–125; the sequence is SLPVRGQRTQTNARTRKGKRKTVAGKKKAVKK. The span at 107–125 shows a compositional bias: basic residues; that stretch reads RTRKGKRKTVAGKKKAVKK.

It belongs to the universal ribosomal protein uS13 family. As to quaternary structure, part of the 30S ribosomal subunit. Forms a loose heterodimer with protein S19. Forms two bridges to the 50S subunit in the 70S ribosome.

Located at the top of the head of the 30S subunit, it contacts several helices of the 16S rRNA. In the 70S ribosome it contacts the 23S rRNA (bridge B1a) and protein L5 of the 50S subunit (bridge B1b), connecting the 2 subunits; these bridges are implicated in subunit movement. Contacts the tRNAs in the A and P-sites. The polypeptide is Small ribosomal subunit protein uS13 (Prosthecochloris aestuarii (strain DSM 271 / SK 413)).